Here is a 447-residue protein sequence, read N- to C-terminus: Tol-Pal system protein TolB (447 aa).

The N-terminal stretch at 1–29 (MITMSRIRSLAAFAVFVILGVAAVLPAQA) is a signal peptide.

This sequence belongs to the TolB family. As to quaternary structure, the Tol-Pal system is composed of five core proteins: the inner membrane proteins TolA, TolQ and TolR, the periplasmic protein TolB and the outer membrane protein Pal. They form a network linking the inner and outer membranes and the peptidoglycan layer.

The protein localises to the periplasm. Part of the Tol-Pal system, which plays a role in outer membrane invagination during cell division and is important for maintaining outer membrane integrity. This Paramagnetospirillum magneticum (strain ATCC 700264 / AMB-1) (Magnetospirillum magneticum) protein is Tol-Pal system protein TolB.